The chain runs to 645 residues: 1,4-alpha-glucan branching enzyme GlgB (645 aa).

The active-site Nucleophile is the Asp309. Glu352 acts as the Proton donor in catalysis. The segment at 619–645 (VKTRKGSKKQDGSKTKVRSNVTSRGKR) is disordered. The span at 636–645 (RSNVTSRGKR) shows a compositional bias: polar residues.

This sequence belongs to the glycosyl hydrolase 13 family. GlgB subfamily. In terms of assembly, monomer.

The catalysed reaction is Transfers a segment of a (1-&gt;4)-alpha-D-glucan chain to a primary hydroxy group in a similar glucan chain.. It participates in glycan biosynthesis; glycogen biosynthesis. In terms of biological role, catalyzes the formation of the alpha-1,6-glucosidic linkages in glycogen by scission of a 1,4-alpha-linked oligosaccharide from growing alpha-1,4-glucan chains and the subsequent attachment of the oligosaccharide to the alpha-1,6 position. This Bacillus cereus (strain ATCC 10987 / NRS 248) protein is 1,4-alpha-glucan branching enzyme GlgB.